A 1417-amino-acid polypeptide reads, in one-letter code: DNA-directed RNA polymerase subunit beta' (1417 aa).

C68, C70, C83, and C86 together coordinate Zn(2+). The Mg(2+) site is built by D458, D460, and D462. 4 residues coordinate Zn(2+): C811, C884, C891, and C894.

It belongs to the RNA polymerase beta' chain family. As to quaternary structure, the RNAP catalytic core consists of 2 alpha, 1 beta, 1 beta' and 1 omega subunit. When a sigma factor is associated with the core the holoenzyme is formed, which can initiate transcription. Mg(2+) serves as cofactor. Zn(2+) is required as a cofactor.

The enzyme catalyses RNA(n) + a ribonucleoside 5'-triphosphate = RNA(n+1) + diphosphate. DNA-dependent RNA polymerase catalyzes the transcription of DNA into RNA using the four ribonucleoside triphosphates as substrates. The polypeptide is DNA-directed RNA polymerase subunit beta' (Francisella tularensis subsp. novicida (strain U112)).